Reading from the N-terminus, the 354-residue chain is Peptide-N(4)-(N-acetyl-beta-D-glucosaminyl)asparagine amidase F (354 aa).

A signal peptide spans 1–40; the sequence is MRKLLIFSISAYLMAGIVSCKGVDSATPVTEDRLALNAVN. The cysteines at positions 91 and 96 are disulfide-linked. Catalysis depends on residues D100, E158, and E246. 2 cysteine pairs are disulfide-bonded: C244–C248 and C271–C292.

In terms of assembly, monomer.

It carries out the reaction Hydrolysis of an N(4)-(acetyl-beta-D-glucosaminyl)asparagine residue in which the glucosamine residue may be further glycosylated, to yield a (substituted) N-acetyl-beta-D-glucosaminylamine and a peptide containing an aspartate residue.. In terms of biological role, cleaves an entire glycan from a glycoprotein. Requires that the glycosylated asparagine moiety (reaction 1) be substituted on its amino (R1) and carboxyl (R2) terminus with a polypeptide chain. This chain is Peptide-N(4)-(N-acetyl-beta-D-glucosaminyl)asparagine amidase F (ngl), found in Elizabethkingia miricola (Chryseobacterium miricola).